Consider the following 301-residue polypeptide: Bifunctional protein FolD (301 aa).

NADP(+) is bound by residues 166 to 168, serine 191, and isoleucine 232; that span reads GKS.

This sequence belongs to the tetrahydrofolate dehydrogenase/cyclohydrolase family. Homodimer.

The catalysed reaction is (6R)-5,10-methylene-5,6,7,8-tetrahydrofolate + NADP(+) = (6R)-5,10-methenyltetrahydrofolate + NADPH. It carries out the reaction (6R)-5,10-methenyltetrahydrofolate + H2O = (6R)-10-formyltetrahydrofolate + H(+). Its pathway is one-carbon metabolism; tetrahydrofolate interconversion. Its function is as follows. Catalyzes the oxidation of 5,10-methylenetetrahydrofolate to 5,10-methenyltetrahydrofolate and then the hydrolysis of 5,10-methenyltetrahydrofolate to 10-formyltetrahydrofolate. This is Bifunctional protein FolD from Orientia tsutsugamushi (strain Ikeda) (Rickettsia tsutsugamushi).